The chain runs to 208 residues: Thymidylate kinase (208 aa).

Residue 10-17 (GPEGSGKT) coordinates ATP.

It belongs to the thymidylate kinase family.

The enzyme catalyses dTMP + ATP = dTDP + ADP. Its function is as follows. Phosphorylation of dTMP to form dTDP in both de novo and salvage pathways of dTTP synthesis. The chain is Thymidylate kinase from Bacillus mycoides (strain KBAB4) (Bacillus weihenstephanensis).